The chain runs to 410 residues: Regulator of microtubule dynamics protein 2 (410 aa).

A helical transmembrane segment spans residues 10-27; it reads IFGIMVGTAGISLLLLWY. Residue Ser51 is modified to Phosphoserine. Residues 68–110 are a coiled coil; the sequence is FQERQLQILEKLNELLTNMEELKEEIRFLKETVPKLEEYIQDE. The residue at position 121 (Ser121) is a Phosphoserine. Over residues 122 to 131 the composition is skewed to basic residues; it reads PQHRARKRRL. The interval 122-151 is disordered; the sequence is PQHRARKRRLPTIQSSATSNSSEEAESEGG. The residue at position 139 (Thr139) is a Phosphothreonine. Tyr152 carries the phosphotyrosine modification. Phosphothreonine occurs at positions 154 and 157.

The protein belongs to the RMDN family. As to quaternary structure, interacts with microtubules.

The protein resides in the membrane. Its subcellular location is the cytoplasm. The protein localises to the cytoskeleton. It localises to the spindle. It is found in the spindle pole. This chain is Regulator of microtubule dynamics protein 2 (RMDN2), found in Macaca fascicularis (Crab-eating macaque).